We begin with the raw amino-acid sequence, 395 residues long: Flagellin D (395 aa).

Belongs to the bacterial flagellin family.

The protein localises to the secreted. The protein resides in the bacterial flagellum. Flagellin is the subunit protein which polymerizes to form the filaments of bacterial flagella. The chain is Flagellin D (flaD) from Rhizobium meliloti (Ensifer meliloti).